A 128-amino-acid polypeptide reads, in one-letter code: RutC family protein BUsg_359 (128 aa).

Belongs to the RutC family.

This chain is RutC family protein BUsg_359, found in Buchnera aphidicola subsp. Schizaphis graminum (strain Sg).